We begin with the raw amino-acid sequence, 81 residues long: uncharacterized protein (81 aa).

To Synechocystis PCC 6803 ssr2439.

In terms of biological role, may have a regulatory function. This is an uncharacterized protein from Synechococcus elongatus (strain ATCC 33912 / PCC 7942 / FACHB-805) (Anacystis nidulans R2).